Consider the following 304-residue polypeptide: Transcription factor bHLH94 (304 aa).

A disordered region spans residues 86–107 (VESHPPPQHRRKRRRTRNCKNK). Residues 92-104 (PQHRRKRRRTRNC) are compositionally biased toward basic residues. Residues 112–163 (NQRMTHIAVERNRRKQMNEYLAVLRSLMPSSYAQRGDQASIVGGAINYVKEL) enclose the bHLH domain.

In terms of assembly, homodimer. As to expression, expressed constitutively in roots, leaves, stems, and flowers.

The protein resides in the nucleus. This is Transcription factor bHLH94 (BHLH94) from Arabidopsis thaliana (Mouse-ear cress).